Consider the following 873-residue polypeptide: DNA mismatch repair protein MutS (873 aa).

625–632 contacts ATP; the sequence is GPNMGGKS.

Belongs to the DNA mismatch repair MutS family.

In terms of biological role, this protein is involved in the repair of mismatches in DNA. It is possible that it carries out the mismatch recognition step. This protein has a weak ATPase activity. This Xanthomonas campestris pv. campestris (strain 8004) protein is DNA mismatch repair protein MutS.